The sequence spans 368 residues: MATLSAARCLVVKIGSALLVDQASGALRQDWLTGLAQDVAEIRARGADVILVSSGSIALGRRVLGLGTGALPLEQAQAAAAVGQIRLARAYEEVLAPHKITTAQVLVTLEDSTDRRRYLNTRATLGTLLSLGVTPIVNENDTIATDEIRYGDNDRLAAQVAVMAGADQLVLLSDVDGLYTANPATDPTATRFDRVDEITPEIEAMAGDAVSGLSKGGMKTKLMAARTAMDAGCAMAITEGARPRPLKALMDGAPATWFVPRTDPLAARKHWIAAMKPRGEITVDAGACAALKRGKSLLPAGITEVSGAFGRGDPVIILAPDGTALGRGLTRYTAVEARAIRGHRSAEIEAVLGYPGRAVLIHRDDMVL.

Lys13 is an ATP binding site. Ser54, Asp141, and Asn153 together coordinate substrate. Residue 173–174 (SD) participates in ATP binding. A PUA domain is found at 278-355 (RGEITVDAGA…AEIEAVLGYP (78 aa)).

The protein belongs to the glutamate 5-kinase family.

It is found in the cytoplasm. The catalysed reaction is L-glutamate + ATP = L-glutamyl 5-phosphate + ADP. It functions in the pathway amino-acid biosynthesis; L-proline biosynthesis; L-glutamate 5-semialdehyde from L-glutamate: step 1/2. In terms of biological role, catalyzes the transfer of a phosphate group to glutamate to form L-glutamate 5-phosphate. The sequence is that of Glutamate 5-kinase from Dinoroseobacter shibae (strain DSM 16493 / NCIMB 14021 / DFL 12).